The primary structure comprises 490 residues: ATP synthase subunit beta, chloroplastic (490 aa).

T6 carries the post-translational modification Phosphothreonine. S13 bears the Phosphoserine mark. Residue 172–179 participates in ATP binding; the sequence is GGAGVGKT.

This sequence belongs to the ATPase alpha/beta chains family. In terms of assembly, F-type ATPases have 2 components, CF(1) - the catalytic core - and CF(0) - the membrane proton channel. CF(1) has five subunits: alpha(3), beta(3), gamma(1), delta(1), epsilon(1). CF(0) has four main subunits: a(1), b(1), b'(1) and c(9-12).

The protein localises to the plastid. The protein resides in the chloroplast thylakoid membrane. It carries out the reaction ATP + H2O + 4 H(+)(in) = ADP + phosphate + 5 H(+)(out). Produces ATP from ADP in the presence of a proton gradient across the membrane. The catalytic sites are hosted primarily by the beta subunits. This Aethionema grandiflorum (Persian stone-cress) protein is ATP synthase subunit beta, chloroplastic.